We begin with the raw amino-acid sequence, 338 residues long: Glycerol-3-phosphate dehydrogenase [NAD(P)+] (338 aa).

Residues serine 13, tryptophan 14, and lysine 108 each contribute to the NADPH site. Sn-glycerol 3-phosphate-binding residues include lysine 108, glycine 139, and serine 141. Alanine 143 is an NADPH binding site. The sn-glycerol 3-phosphate site is built by lysine 194, aspartate 247, serine 257, arginine 258, and asparagine 259. Lysine 194 (proton acceptor) is an active-site residue. An NADPH-binding site is contributed by arginine 258. Positions 282 and 284 each coordinate NADPH.

It belongs to the NAD-dependent glycerol-3-phosphate dehydrogenase family.

The protein resides in the cytoplasm. The catalysed reaction is sn-glycerol 3-phosphate + NAD(+) = dihydroxyacetone phosphate + NADH + H(+). The enzyme catalyses sn-glycerol 3-phosphate + NADP(+) = dihydroxyacetone phosphate + NADPH + H(+). The protein operates within membrane lipid metabolism; glycerophospholipid metabolism. Catalyzes the reduction of the glycolytic intermediate dihydroxyacetone phosphate (DHAP) to sn-glycerol 3-phosphate (G3P), the key precursor for phospholipid synthesis. This Listeria monocytogenes serotype 4a (strain HCC23) protein is Glycerol-3-phosphate dehydrogenase [NAD(P)+].